The sequence spans 953 residues: 26S proteasome non-ATPase regulatory subunit 1 (953 aa).

Position 1 is an N-acetylmethionine; partial (Met1). Thr273 is subject to Phosphothreonine. The interval 279–318 (PGSTNTGTVPGSEKDSDSMETEEKTGSAFVGKTPEASPEP) is disordered. A Phosphoserine modification is found at Ser290. Positions 290 to 303 (SEKDSDSMETEEKT) are enriched in basic and acidic residues. Position 310 is an N6-acetyllysine (Lys310). Residue Thr311 is modified to Phosphothreonine. Ser315 bears the Phosphoserine mark. PC repeat units lie at residues 403 to 436 (TATA…PGSA), 441 to 474 (GGLY…DIVR), 476 to 510 (GGSL…VTGE), 511 to 545 (AAGL…EKIL), 547 to 580 (GLAV…ILRR), 581 to 616 (SGMY…DVRR), 617 to 649 (AAVE…PHVR), 651 to 685 (GAAM…YVRQ), 686 to 726 (GALI…DVMA), and 729 to 761 (GAIL…PSVV). N6-acetyllysine is present on Lys720. Thr830 bears the Phosphothreonine mark. Ser834 bears the Phosphoserine mark. Disordered regions lie at residues 839–881 (AKKK…LDNP) and 930–953 (AHGP…YIDD). Composition is skewed to basic and acidic residues over residues 842-852 (KEKEKEKKEEE) and 859-872 (AEKK…KEPE). A compositionally biased stretch (acidic residues) spans 936-953 (EEEEQEPEPPEPFEYIDD).

This sequence belongs to the proteasome subunit S1 family. In terms of assembly, component of the 19S proteasome regulatory particle complex. The 26S proteasome consists of a 20S core particle (CP) and two 19S regulatory subunits (RP). The regulatory particle is made of a lid composed of 9 subunits, a base containing 6 ATPases and few additional components including PSMD1. Interacts with ADRM1. Interacts with ZFAND1.

Component of the 26S proteasome, a multiprotein complex involved in the ATP-dependent degradation of ubiquitinated proteins. This complex plays a key role in the maintenance of protein homeostasis by removing misfolded or damaged proteins, which could impair cellular functions, and by removing proteins whose functions are no longer required. Therefore, the proteasome participates in numerous cellular processes, including cell cycle progression, apoptosis, or DNA damage repair. This Pongo abelii (Sumatran orangutan) protein is 26S proteasome non-ATPase regulatory subunit 1 (PSMD1).